Reading from the N-terminus, the 177-residue chain is Adenine phosphoribosyltransferase (177 aa).

This sequence belongs to the purine/pyrimidine phosphoribosyltransferase family. Homodimer.

The protein resides in the cytoplasm. It catalyses the reaction AMP + diphosphate = 5-phospho-alpha-D-ribose 1-diphosphate + adenine. The protein operates within purine metabolism; AMP biosynthesis via salvage pathway; AMP from adenine: step 1/1. In terms of biological role, catalyzes a salvage reaction resulting in the formation of AMP, that is energically less costly than de novo synthesis. The chain is Adenine phosphoribosyltransferase from Prosthecochloris aestuarii (strain DSM 271 / SK 413).